A 234-amino-acid chain; its full sequence is UPF0104 membrane protein MJ1078 (234 aa).

A run of 5 helical transmembrane segments spans residues 32–52, 70–90, 123–143, 164–184, and 198–218; these read VGTV…LLFI, IKWG…FLIV, LITL…FIFL, LTAI…LIYI, and VLIL…AIMF.

This sequence belongs to the UPF0104 family.

Its subcellular location is the cell membrane. In Methanocaldococcus jannaschii (strain ATCC 43067 / DSM 2661 / JAL-1 / JCM 10045 / NBRC 100440) (Methanococcus jannaschii), this protein is UPF0104 membrane protein MJ1078.